Consider the following 248-residue polypeptide: 3-deoxy-manno-octulosonate cytidylyltransferase (248 aa).

This sequence belongs to the KdsB family.

The protein localises to the cytoplasm. It catalyses the reaction 3-deoxy-alpha-D-manno-oct-2-ulosonate + CTP = CMP-3-deoxy-beta-D-manno-octulosonate + diphosphate. Its pathway is nucleotide-sugar biosynthesis; CMP-3-deoxy-D-manno-octulosonate biosynthesis; CMP-3-deoxy-D-manno-octulosonate from 3-deoxy-D-manno-octulosonate and CTP: step 1/1. The protein operates within bacterial outer membrane biogenesis; lipopolysaccharide biosynthesis. Its function is as follows. Activates KDO (a required 8-carbon sugar) for incorporation into bacterial lipopolysaccharide in Gram-negative bacteria. The protein is 3-deoxy-manno-octulosonate cytidylyltransferase of Shigella dysenteriae serotype 1 (strain Sd197).